A 598-amino-acid polypeptide reads, in one-letter code: UvrABC system protein C (598 aa).

The 80-residue stretch at 13 to 92 (SSPGVYLMKD…IKKYQPRYNV (80 aa)) folds into the GIY-YIG domain. The UVR domain occupies 206 to 241 (RSTISNLEKAIEKASQEQKFEHAAALYRTLTLIRQT).

It belongs to the UvrC family. As to quaternary structure, interacts with UvrB in an incision complex.

The protein localises to the cytoplasm. Functionally, the UvrABC repair system catalyzes the recognition and processing of DNA lesions. UvrC both incises the 5' and 3' sides of the lesion. The N-terminal half is responsible for the 3' incision and the C-terminal half is responsible for the 5' incision. This chain is UvrABC system protein C, found in Chlamydia trachomatis serovar A (strain ATCC VR-571B / DSM 19440 / HAR-13).